The primary structure comprises 390 residues: Na(+)/H(+) antiporter NhaA (390 aa).

A run of 12 helical transmembrane segments spans residues 14-34 (AAGG…ANLN), 61-81 (MLLW…GLEV), 97-117 (SLPV…YLAF), 126-146 (AGWA…LALL), 156-176 (VFLM…IALF), 181-201 (LSMV…VLNL), 221-241 (VLKS…FVPL), 256-276 (ALHP…NAGV), 280-300 (GVTL…GLFI), 305-325 (GISL…PPGV), 330-350 (ILAV…IASL), and 362-382 (WAKL…YALL).

It belongs to the NhaA Na(+)/H(+) (TC 2.A.33) antiporter family.

It is found in the cell inner membrane. It catalyses the reaction Na(+)(in) + 2 H(+)(out) = Na(+)(out) + 2 H(+)(in). Its function is as follows. Na(+)/H(+) antiporter that extrudes sodium in exchange for external protons. This is Na(+)/H(+) antiporter NhaA from Cronobacter sakazakii (strain ATCC BAA-894) (Enterobacter sakazakii).